The following is a 1196-amino-acid chain: RAB11-binding protein RELCH homolog (1196 aa).

Disordered regions lie at residues 1 to 73, 159 to 180, and 195 to 225; these read MAAP…SPLN, ATAA…QLNR, and YSDD…SSPE. A compositionally biased stretch (gly residues) spans 8–26; it reads SGPGGSSGGITGGAGGSLG. The span at 27–37 shows a compositional bias: low complexity; it reads VVGPSTSTSSV. Over residues 43-69 the composition is skewed to acidic residues; the sequence is DSEEEEDGGEEEEEEEEDDNEEDDEDV. Polar residues predominate over residues 169-180; sequence NTTASTGGQLNR. Residues 195–219 are compositionally biased toward basic and acidic residues; it reads YSDDGNRETDERVAENEVPLQERKN. Positions 234-266 constitute a LisH domain; that stretch reads EKRALNFLVNEYLLKNNNKLTSITFSDENDDQD. A coiled-coil region spans residues 333–374; the sequence is IIKELEDKIILCNNEKAALLEQIGNLERQIESLQKENSASGV. The disordered stretch occupies residues 370 to 393; it reads SASGVCSAAPPTSDRLQSQTSEES. HEAT repeat units follow at residues 620–659 and 984–1022; these read VLAM…KYSQ and VVPA…LLER.

It is found in the recycling endosome. The protein resides in the golgi apparatus. It localises to the trans-Golgi network. Functionally, may regulate intracellular cholesterol transport. This Xenopus tropicalis (Western clawed frog) protein is RAB11-binding protein RELCH homolog (relch).